The primary structure comprises 837 residues: Semaphorin-4B (837 aa).

An N-terminal signal peptide occupies residues 1-43 (MLRTAMGLRSWLAAPWGALPPRPPLLLLLLLLLLLQPPPPTWA). Residues 44-717 (LSPRISLPLG…WGADRSYWKE (674 aa)) are Extracellular-facing. The 477-residue stretch at 47–523 (RISLPLGSEE…SHSGVVQVPM (477 aa)) folds into the Sema domain. Asn-69 and Asn-96 each carry an N-linked (GlcNAc...) asparagine glycan. 2 disulfides stabilise this stretch: Cys-120–Cys-131 and Cys-149–Cys-158. Asn-165 carries an N-linked (GlcNAc...) asparagine glycan. 2 disulfide bridges follow: Cys-286/Cys-399 and Cys-310/Cys-359. N-linked (GlcNAc...) asparagine glycosylation is found at Asn-410 and Asn-525. Residues 525–579 (NCSLYRSCGDCLLARDPYCAWSGSSCKHVSLYQPQLATRPWIQDIEGASAKDLCS) form the PSI domain. Cystine bridges form between Cys-526–Cys-543 and Cys-611–Cys-656. The Ig-like C2-type domain occupies 604–663 (NTVNTLACPLLSNLATRLWLRNGAPVNASASCHVLPTGDLLLVGTQQLGEFQCWSLEEGF). Asn-630 is a glycosylation site (N-linked (GlcNAc...) asparagine). A helical membrane pass occupies residues 718-738 (FLVMCTLFVLAVLLPVLFLLY). Topologically, residues 739–837 (RHRNSMKVFL…LGSEIRDSVV (99 aa)) are cytoplasmic. The interval 767 to 805 (PETRPLNGLGPPSTPLDHRGYQSLSDSPPGSRVFTESEK) is disordered. Phosphoserine is present on residues Ser-793, Ser-818, and Ser-830.

The protein belongs to the semaphorin family.

The protein localises to the membrane. In terms of biological role, inhibits axonal extension by providing local signals to specify territories inaccessible for growing axons. The chain is Semaphorin-4B from Homo sapiens (Human).